The primary structure comprises 200 residues: dTDP-4-dehydrorhamnose 3,5-epimerase (200 aa).

Substrate-binding positions include arginine 21, glutamate 26, 45 to 47 (QVN), and arginine 57. Residue histidine 60 is the Proton acceptor of the active site. Positions 70 and 116 each coordinate substrate. Tyrosine 129 serves as the catalytic Proton donor. Glutamate 140 and lysine 165 together coordinate substrate.

This sequence belongs to the dTDP-4-dehydrorhamnose 3,5-epimerase family.

The enzyme catalyses dTDP-4-dehydro-6-deoxy-alpha-D-glucose = dTDP-4-dehydro-beta-L-rhamnose. It functions in the pathway carbohydrate biosynthesis; dTDP-L-rhamnose biosynthesis. Its pathway is antibiotic biosynthesis; streptomycin biosynthesis. Functionally, involved in the biosynthesis of the dihydrostreptose moiety of streptomycin. Catalyzes the epimerization of the C3' and C5'positions of dTDP-6-deoxy-D-xylo-4-hexulose, forming dTDP-6-deoxy-L-lyxo-4-hexulose. The polypeptide is dTDP-4-dehydrorhamnose 3,5-epimerase (Streptomyces griseus).